A 453-amino-acid polypeptide reads, in one-letter code: Zinc finger and BTB domain-containing protein 44 (453 aa).

K4 is covalently cross-linked (Glycyl lysine isopeptide (Lys-Gly) (interchain with G-Cter in SUMO2)). Positions 31–98 constitute a BTB domain; the sequence is CDITIRVQDR…AYTATLSINT (68 aa). Phosphoserine occurs at positions 135, 159, 161, 165, 191, 194, and 199. T200 carries the phosphothreonine modification. Positions 241 to 265 are disordered; sequence QPEKAKQAENTRTLELPGPSEAGRR. K290 participates in a covalent cross-link: Glycyl lysine isopeptide (Lys-Gly) (interchain with G-Cter in SUMO2). 2 disordered regions span residues 295-324 and 336-368; these read SDEE…PGSE and SSSI…EDDR. Residues 304 to 318 show a composition bias toward low complexity; the sequence is SQPVSASQSSLSDQQ. The span at 352-361 shows a compositional bias: polar residues; the sequence is TLQSTSSTNA. 2 C2H2-type zinc fingers span residues 399–421 and 427–449; these read FQCP…MLIH and FQCD…RLKH.

It is found in the nucleus. This is Zinc finger and BTB domain-containing protein 44 (Zbtb44) from Rattus norvegicus (Rat).